Here is a 79-residue protein sequence, read N- to C-terminus: U-actitoxin-Avd8a (79 aa).

The N-terminal stretch at 1–19 (MKSLVIVFVVLLGVAMISA) is a signal peptide. Positions 20 to 36 (NEEELLAILQDQRNDAR) are excised as a propeptide.

The protein belongs to the sea anemone 8 toxin family.

The protein localises to the secreted. It localises to the nematocyst. This is U-actitoxin-Avd8a from Anemonia viridis (Snakelocks anemone).